The following is a 206-amino-acid chain: dITP/XTP pyrophosphatase (206 aa).

Serine 7–lysine 12 is a binding site for substrate. Catalysis depends on aspartate 70, which acts as the Proton acceptor. Aspartate 70 is a binding site for Mg(2+). Substrate is bound by residues threonine 71, phenylalanine 154–aspartate 157, lysine 177, and histidine 182–arginine 183.

It belongs to the HAM1 NTPase family. As to quaternary structure, homodimer. The cofactor is Mg(2+).

The catalysed reaction is XTP + H2O = XMP + diphosphate + H(+). The enzyme catalyses dITP + H2O = dIMP + diphosphate + H(+). It carries out the reaction ITP + H2O = IMP + diphosphate + H(+). Its function is as follows. Pyrophosphatase that catalyzes the hydrolysis of nucleoside triphosphates to their monophosphate derivatives, with a high preference for the non-canonical purine nucleotides XTP (xanthosine triphosphate), dITP (deoxyinosine triphosphate) and ITP. Seems to function as a house-cleaning enzyme that removes non-canonical purine nucleotides from the nucleotide pool, thus preventing their incorporation into DNA/RNA and avoiding chromosomal lesions. The polypeptide is dITP/XTP pyrophosphatase (Chlamydia caviae (strain ATCC VR-813 / DSM 19441 / 03DC25 / GPIC) (Chlamydophila caviae)).